The sequence spans 369 residues: Chorismate synthase (369 aa).

Residues Arg48 and Arg54 each contribute to the NADP(+) site. FMN is bound by residues 125 to 127 (RSS), 238 to 239 (NA), Gly278, 293 to 297 (KPTSS), and Arg319.

This sequence belongs to the chorismate synthase family. Homotetramer. FMNH2 serves as cofactor.

The enzyme catalyses 5-O-(1-carboxyvinyl)-3-phosphoshikimate = chorismate + phosphate. Its pathway is metabolic intermediate biosynthesis; chorismate biosynthesis; chorismate from D-erythrose 4-phosphate and phosphoenolpyruvate: step 7/7. Catalyzes the anti-1,4-elimination of the C-3 phosphate and the C-6 proR hydrogen from 5-enolpyruvylshikimate-3-phosphate (EPSP) to yield chorismate, which is the branch point compound that serves as the starting substrate for the three terminal pathways of aromatic amino acid biosynthesis. This reaction introduces a second double bond into the aromatic ring system. The protein is Chorismate synthase of Cupriavidus metallidurans (strain ATCC 43123 / DSM 2839 / NBRC 102507 / CH34) (Ralstonia metallidurans).